The sequence spans 150 residues: MNTNNLLLENKKAKFNYFIEEKISCGIVLKGTEVKSIKAKKLSFNNSFASIKKEELWLENLHVSKYKEGNIFNHDELRPRKLLIKKRELQRLKKFKEKEGYTLIPISFYLKKSIIKVEVGICKGKKLYDKREILKQKSIKKDLSREIKYK.

The protein belongs to the SmpB family.

The protein resides in the cytoplasm. Its function is as follows. Required for rescue of stalled ribosomes mediated by trans-translation. Binds to transfer-messenger RNA (tmRNA), required for stable association of tmRNA with ribosomes. tmRNA and SmpB together mimic tRNA shape, replacing the anticodon stem-loop with SmpB. tmRNA is encoded by the ssrA gene; the 2 termini fold to resemble tRNA(Ala) and it encodes a 'tag peptide', a short internal open reading frame. During trans-translation Ala-aminoacylated tmRNA acts like a tRNA, entering the A-site of stalled ribosomes, displacing the stalled mRNA. The ribosome then switches to translate the ORF on the tmRNA; the nascent peptide is terminated with the 'tag peptide' encoded by the tmRNA and targeted for degradation. The ribosome is freed to recommence translation, which seems to be the essential function of trans-translation. This chain is SsrA-binding protein, found in Borreliella burgdorferi (strain ATCC 35210 / DSM 4680 / CIP 102532 / B31) (Borrelia burgdorferi).